Reading from the N-terminus, the 184-residue chain is ADP-ribosylation factor-like protein 2 (184 aa).

A lipid anchor (N-myristoyl glycine) is attached at Gly2. GTP-binding positions include 23-30, 66-70, Gly68, and 125-128; these read GLDNAGKT, DVGGQ, and NKSD.

This sequence belongs to the small GTPase superfamily. Arf family.

Its subcellular location is the cytoplasm. It localises to the cell membrane. The protein localises to the cytoskeleton. It is found in the microtubule organizing center. The protein resides in the centrosome. In terms of biological role, GTP-binding protein that functions in embryogenesis, cytokinesis, germline development and microtubulule cytoskeleton dynamics. The sequence is that of ADP-ribosylation factor-like protein 2 (evl-20.1) from Caenorhabditis briggsae.